The following is a 1768-amino-acid chain: Callose synthase 11 (1768 aa).

The Cytoplasmic segment spans residues 1 to 308 (MRRQRPSVAT…WNVYRSFDRL (308 aa)). A helical membrane pass occupies residues 309-329 (WILLLLYLQAAIIVATSDVKF). Topologically, residues 330–335 (PWQDRD) are extracellular. Residues 336–356 (VEVALLTVFISWAGLRLLQSV) form a helical membrane-spanning segment. Over 357 to 370 (LDASTQYSLVSRET) the chain is Cytoplasmic. A helical membrane pass occupies residues 371–391 (YWLFIRLTLKFVVAVAWTVLF). Residues 392-421 (SVFYARIWSQKNKDGVWSRAANERVVTFLK) are Extracellular-facing. A helical transmembrane segment spans residues 422–442 (VVFVYVIPELLALVLFIVPCI). Topologically, residues 443-480 (RNWVEELNLGVVYFLTWWFYSKTFVGRGMREGLVDNVK) are cytoplasmic. A helical membrane pass occupies residues 481-501 (YTLFWIIVLATKFIFSYFLQI). The Extracellular segment spans residues 502–530 (RPLIAPTRALLNLKDATYNWHEFFGSTHR). A helical transmembrane segment spans residues 531 to 551 (IAVGMLWLPVILVYLMDLQIW). Residues 552–1341 (YSIYSSLVGA…FFRMLSFFYT (790 aa)) lie on the Cytoplasmic side of the membrane. A helical transmembrane segment spans residues 1342–1362 (TVGYYFNTMLIVFTVYAFLWG). Topologically, residues 1363–1386 (RLYLALSGVEKIAKDRSSSNEALG) are extracellular. A helical transmembrane segment spans residues 1387–1407 (AILNQQFIIQLGLFTALPMIL). The Cytoplasmic segment spans residues 1408-1413 (ENSLER). The helical transmembrane segment at 1414-1434 (GFLPAVWDFITMQLQLASFFY) threads the bilayer. At 1435–1481 (TFSMGTRTHYFGRTILHGGAKYRATGRGFVVEHKKFAENYRLYARTH) the chain is on the extracellular side. The helical transmembrane segment at 1482-1502 (FIKAIELAIILLVYAAYSPLA) threads the bilayer. Residues 1503–1508 (KSSFVY) lie on the Cytoplasmic side of the membrane. The chain crosses the membrane as a helical span at residues 1509–1529 (ILMTISSWFLITSWIISPFLF). Over 1530 to 1583 (NPSGFDWLKTVNDFDDFIAWLWSRGGLFTKADQSWFTWWNEEQEHLKTTGVWGK) the chain is Extracellular. A helical membrane pass occupies residues 1584 to 1604 (LLEIILDLRFFFFQYSIVYHL). Topologically, residues 1605-1612 (RIAENRTS) are cytoplasmic. Residues 1613-1633 (IGVYLISWGCIIGIVAIYITT) traverse the membrane as a helical segment. At 1634–1649 (IYAQKRYSVKEHIKYR) the chain is on the extracellular side. The helical transmembrane segment at 1650–1670 (FIQFLVILLTVLVVVMMLQFT) threads the bilayer. Topologically, residues 1671–1673 (KLT) are cytoplasmic. Residues 1674 to 1694 (VVDLLISLLAFVPTGWGLISI) traverse the membrane as a helical segment. Topologically, residues 1695-1719 (AQVLKPFLLSTVVWDTVISVARFYD) are extracellular. Residues 1720–1740 (LFFGLIVMAPVALLSWLPGFQ) traverse the membrane as a helical segment. Residues 1741 to 1768 (NMQTRILFNEAFSRGLQISIILAGKKST) are Cytoplasmic-facing.

The protein belongs to the glycosyltransferase 48 family. Ubiquitous.

The protein localises to the cell membrane. It catalyses the reaction [(1-&gt;3)-beta-D-glucosyl](n) + UDP-alpha-D-glucose = [(1-&gt;3)-beta-D-glucosyl](n+1) + UDP + H(+). Required the formation of the callose wall separating the tetraspores (interstitial wall), but not for the callose wall surrounding the pollen mother cells (peripheral wall). Functionally redudant to CALS12 (GSL5). During plant growth and development, callose is found as a transitory component of the cell plate in dividing cells, is a major component of pollen mother cell walls and pollen tubes, and is found as a structural component of plasmodesmatal canals. The protein is Callose synthase 11 (CALS11) of Arabidopsis thaliana (Mouse-ear cress).